Here is a 338-residue protein sequence, read N- to C-terminus: Trace amine-associated receptor 1 (338 aa).

The Extracellular segment spans residues 1–24 (MPFCHNIINISCVKNNWSNDVRAS). 3 cysteine pairs are disulfide-bonded: Cys-4–Cys-177, Cys-12–Cys-87, and Cys-95–Cys-181. 2 N-linked (GlcNAc...) asparagine glycosylation sites follow: Asn-9 and Asn-16. Residues 25-45 (LYSLMALIILTTLVGNLIVIV) form a helical membrane-spanning segment. Residues 46 to 58 (SISHFKQLHTPTN) are Cytoplasmic-facing. The chain crosses the membrane as a helical span at residues 59 to 79 (WLIHSMATVDFLLGCLVMPYS). At 80–97 (MVRSAEHCWYFGEVFCKI) the chain is on the extracellular side. Residues 98-118 (HTSTDIMLSSASIFHLSFISI) traverse the membrane as a helical segment. Asp-102 lines the 2-phenylethylamine pocket. Over 119–135 (DRYYAVCDPLRYKAKIN) the chain is Cytoplasmic. A helical transmembrane segment spans residues 136 to 156 (ILVVCVMIFISWSVPAVFAFG). At 157–187 (MIFLELNFKGAEEIYYKHVHCRGGCSVFFSK) the chain is on the extracellular side. A helical transmembrane segment spans residues 188 to 208 (ISGVLAFMTSFYIPGSIMLCI). At 209-251 (YYRIYLIAKEQARSINDANQKLQIGLEMKNGISQSKERKAVKT) the chain is on the cytoplasmic side. Residues 252 to 272 (LGIVMGVFLICWCPFFVCTVI) traverse the membrane as a helical segment. Residues 273 to 286 (DPFLHYTIPPTLND) lie on the Extracellular side of the membrane. Residues 287-307 (VLIWFGYLNSTFNPMVYAFFY) traverse the membrane as a helical segment. Over 308–338 (PWFRKALKMILFGKIFQKDSSRCKLFLESSS) the chain is Cytoplasmic.

Belongs to the G-protein coupled receptor 1 family.

Its subcellular location is the endomembrane system. The protein resides in the endoplasmic reticulum membrane. The protein localises to the cell membrane. Its function is as follows. Intracellular G-protein coupled receptor for trace amines, which recognizes endogenous amine-containing metabolites such as beta-phenylethylamine (beta-PEA), 3-iodothyronamine (T1AM), isoamylamine (IAA), cadaverine (CAD), cyclohexylamine (CHA), p-tyramine (p-TYR), trimethylamine (TMA), octopamine and tryptamine. Also functions as a receptor for various drugs and psychoactive substances, such as amphetamine and methamphetamine. Unresponsive to classical biogenic amines, such as epinephrine and histamine and only partially activated by dopamine and serotonin. Expressed in both the central and peripheral nervous system: TAAR1 activation regulates the activity of several neurotransmitter signaling pathways by (1) decreasing the basal firing rates of the neurons involved and by (2) lowering the sensitivity of receptors to neurotransmitters. Ligand binding causes a conformation change that triggers signaling via guanine nucleotide-binding proteins (G proteins) and modulates the activity of downstream effectors. TAAR1 is coupled with different G(i)/G(o)-, G(s)- or G(q)/G(11) classes of G alpha proteins depending on the ligand. CAD-binding is coupled to G(i)/G(o) G alpha proteins and mediates inhibition of adenylate cyclase activity. T1AM- or beta-PEA-binding is coupled to G(s) G alpha proteins and mediates activation of adenylate cyclase activity. CHA- or IAA-binding is coupled to G(q)/G(11) G alpha proteins and activates phospholipase C-beta, releasing diacylglycerol (DAG) and inositol 1,4,5-trisphosphate (IP3) second messengers. TMA-binding is coupled with all three G(i)/G(o)-, G(s)- or G(q)/G(11) G alpha protein subtypes. The protein is Trace amine-associated receptor 1 (TAAR1) of Macaca mulatta (Rhesus macaque).